Consider the following 172-residue polypeptide: RNA pyrophosphohydrolase (172 aa).

Residues 6–149 (GFRANVGIII…KRDVYRKVMK (144 aa)) form the Nudix hydrolase domain. Residues 38 to 59 (GGVDEGETPEEAMFRELYEEVG) carry the Nudix box motif.

It belongs to the Nudix hydrolase family. RppH subfamily. A divalent metal cation serves as cofactor.

In terms of biological role, accelerates the degradation of transcripts by removing pyrophosphate from the 5'-end of triphosphorylated RNA, leading to a more labile monophosphorylated state that can stimulate subsequent ribonuclease cleavage. The sequence is that of RNA pyrophosphohydrolase from Shewanella sediminis (strain HAW-EB3).